The following is a 560-amino-acid chain: MAASAFLLIASFLLVLMALAKPLGSLLARLINGEALPGVGGVERALWAVLGIRQEEMDWKRYLLAILLFNTLGLVLLFAILMCQGVLPLNPQNLPGLSWHLALNTAVSFVANTNWQSYAGESTVSYFSQMAGLAVQNFLSAATGIAVAFALIRAFARQSATTLGNAWQDLTRVTLWVLMPISLIIALFFIQQGAIQNFSAYQPFTTLEGARQMLPMGPVASQEAIKMLGTNGGGFFNANSSHPFENPTALTNVVQMLAIFLIPAALCFAFGDAVGDARQGRAILWTMTVIFVVCVALVMWAETTGNPHFLTLGADSAANMEGKESRFGILASSLFAVVTTAASCGAVNAMHDTFTALGGMIPMWLMQIGEVVFGGVGSGLYGMLLFVLLGVFIAGLMIGRTPEYLGKKIDVREMKMTALAILVTPALVLLGTALAMMTDAGRAGMFNPGIHGFSEVLYAVSSAANNNGSAFGGLSANTPFWNLLLAFCMWFGRFLVIIPVMAIAGSLAAKKAQPASPGTLPTHGALFIGLLTGTVLLVGALTFIPALALGPVAEHLSLVK.

12 consecutive transmembrane segments (helical) span residues 6 to 26 (FLLI…LGSL), 63 to 83 (LLAI…ILMC), 132 to 152 (GLAV…FALI), 175 to 195 (LWVL…QGAI), 250 to 270 (LTNV…CFAF), 282 to 302 (AILW…MWAE), 327 to 347 (FGIL…CGAV), 356 to 376 (ALGG…FGGV), 379 to 399 (GLYG…LMIG), 416 to 436 (MTAL…ALAM), 483 to 503 (LLLA…VMAI), and 524 to 544 (GALF…LTFI).

Belongs to the KdpA family. As to quaternary structure, the system is composed of three essential subunits: KdpA, KdpB and KdpC.

The protein localises to the cell inner membrane. Functionally, part of the high-affinity ATP-driven potassium transport (or Kdp) system, which catalyzes the hydrolysis of ATP coupled with the electrogenic transport of potassium into the cytoplasm. This subunit binds the periplasmic potassium ions and delivers the ions to the membrane domain of KdpB through an intramembrane tunnel. In Cronobacter sakazakii (strain ATCC BAA-894) (Enterobacter sakazakii), this protein is Potassium-transporting ATPase potassium-binding subunit.